The chain runs to 789 residues: Zinc finger FYVE domain-containing protein 1 (789 aa).

Residues 416 to 788 form a required for localization in the lipid droplets region; that stretch reads MAHSSFFPDE…LSVMTGKGPL (373 aa). 2 FYVE-type zinc fingers span residues 598 to 659 and 715 to 775; these read NSQI…EARN and DHEI…KKPA. 16 residues coordinate Zn(2+): C604, C607, C620, C623, C628, C631, C651, C654, C721, C724, C737, C740, C745, C748, C767, and C770.

In terms of assembly, interacts with RAB18 (in GTP-bound form). Interacts with BSCL2 in a RAB18-dependent manner. Interacts with ZW10.

It localises to the golgi apparatus. Its subcellular location is the golgi stack. It is found in the endoplasmic reticulum. The protein resides in the preautophagosomal structure. The protein localises to the lipid droplet. It localises to the mitochondrion. Its function is as follows. Plays a role in the formation of lipid droplets (LDs) which are storage organelles at the center of lipid and energy homeostasis. Regulates the morphology, size and distribution of LDs. Mediates the formation of endoplasmic reticulum-lipid droplets (ER-LD) contact sites by forming a complex with RAB18 and ZW10. Binds to phosphatidylinositol 3-phosphate (PtdIns3P) through FYVE-type zinc finger. This chain is Zinc finger FYVE domain-containing protein 1 (ZFYVE1), found in Pongo abelii (Sumatran orangutan).